We begin with the raw amino-acid sequence, 350 residues long: Ribosomal RNA large subunit methyltransferase Cfr (350 aa).

Glutamate 92 (proton acceptor) is an active-site residue. Positions 99 to 333 constitute a Radical SAM core domain; that stretch reads EAGWESFCIS…VTIRSQFGRE (235 aa). Cysteines 106 and 338 form a disulfide. Residues cysteine 113, cysteine 117, and cysteine 120 each coordinate [4Fe-4S] cluster. S-adenosyl-L-methionine is bound by residues 159–160, serine 190, 213–215, and asparagine 293; these read GE and SLH. The active-site S-methylcysteine intermediate is the cysteine 338.

This sequence belongs to the radical SAM superfamily. RlmN family. Cfr subfamily. [4Fe-4S] cluster serves as cofactor.

The protein resides in the cytoplasm. The catalysed reaction is adenosine(2503) in 23S rRNA + 2 reduced [2Fe-2S]-[ferredoxin] + 2 S-adenosyl-L-methionine = 8-methyladenosine(2503) in 23S rRNA + 5'-deoxyadenosine + L-methionine + 2 oxidized [2Fe-2S]-[ferredoxin] + S-adenosyl-L-homocysteine. Its function is as follows. Specifically methylates position 8 of adenine 2503 in 23S rRNA. Confers resistance to some classes of antibiotics. The protein is Ribosomal RNA large subunit methyltransferase Cfr of Shouchella clausii (strain KSM-K16) (Alkalihalobacillus clausii).